The sequence spans 318 residues: Transaldolase (318 aa).

The Schiff-base intermediate with substrate role is filled by Lys132.

This sequence belongs to the transaldolase family. Type 1 subfamily. In terms of assembly, homodimer.

The protein resides in the cytoplasm. It carries out the reaction D-sedoheptulose 7-phosphate + D-glyceraldehyde 3-phosphate = D-erythrose 4-phosphate + beta-D-fructose 6-phosphate. It participates in carbohydrate degradation; pentose phosphate pathway; D-glyceraldehyde 3-phosphate and beta-D-fructose 6-phosphate from D-ribose 5-phosphate and D-xylulose 5-phosphate (non-oxidative stage): step 2/3. In terms of biological role, transaldolase is important for the balance of metabolites in the pentose-phosphate pathway. The chain is Transaldolase from Shewanella sediminis (strain HAW-EB3).